A 482-amino-acid polypeptide reads, in one-letter code: Magnesium-dependent glutamate N-prenyltransferase (482 aa).

Positions 351, 355, 359, and 366 each coordinate Mg(2+).

Belongs to the terpene synthase family. Requires Mg(2+) as cofactor.

It carries out the reaction (2E)-geranyl diphosphate + L-glutamate = N-geranyl-L-glutamate + diphosphate. It participates in secondary metabolite biosynthesis. Functionally, magnesium-dependent glutamate N-prenyltransferase: part of the gene cluster that mediates the biosynthesis of domoic acid (DA) and derivatives, natural products with neurochemical activity acting as ionotropic glutamate receptor (iGluR) agonists, thus being neurotoxins causing amnesic shellfish poisoning (ASP). Catalyzes the conversion of L-glutamic acid (L-Glu) to N-geranyl-L-glutamic acid (NGG) in the presence of geranyl diphosphate (GPP). Also able to catalyze the formation of farnesyl-L-glutamate from farnesyl diphosphate (FPP). Cannot use dimethylallyl diphosphate (DMAPP) as substrate. The chain is Magnesium-dependent glutamate N-prenyltransferase from Pseudo-nitzschia multiseries (Marine planktonic diatom).